The chain runs to 166 residues: 2-C-methyl-D-erythritol 2,4-cyclodiphosphate synthase (166 aa).

A divalent metal cation is bound by residues Asp-15 and His-17. 4-CDP-2-C-methyl-D-erythritol 2-phosphate is bound by residues Asp-15–His-17 and His-43–Ser-44. A divalent metal cation is bound at residue His-51. Residues Asp-65–Gly-67, Thr-141–Glu-144, and Arg-151 contribute to the 4-CDP-2-C-methyl-D-erythritol 2-phosphate site.

This sequence belongs to the IspF family. Homotrimer. Requires a divalent metal cation as cofactor.

It carries out the reaction 4-CDP-2-C-methyl-D-erythritol 2-phosphate = 2-C-methyl-D-erythritol 2,4-cyclic diphosphate + CMP. It functions in the pathway isoprenoid biosynthesis; isopentenyl diphosphate biosynthesis via DXP pathway; isopentenyl diphosphate from 1-deoxy-D-xylulose 5-phosphate: step 4/6. Involved in the biosynthesis of isopentenyl diphosphate (IPP) and dimethylallyl diphosphate (DMAPP), two major building blocks of isoprenoid compounds. Catalyzes the conversion of 4-diphosphocytidyl-2-C-methyl-D-erythritol 2-phosphate (CDP-ME2P) to 2-C-methyl-D-erythritol 2,4-cyclodiphosphate (ME-CPP) with a corresponding release of cytidine 5-monophosphate (CMP). This is 2-C-methyl-D-erythritol 2,4-cyclodiphosphate synthase from Synechococcus sp. (strain CC9311).